We begin with the raw amino-acid sequence, 229 residues long: Ribosomal RNA large subunit methyltransferase E (229 aa).

Residues 1–20 (MSRAGNGGRQRIKTAKGRSA) are disordered. S-adenosyl-L-methionine contacts are provided by glycine 75, tryptophan 77, aspartate 94, aspartate 110, and aspartate 134. The active-site Proton acceptor is the lysine 174.

Belongs to the class I-like SAM-binding methyltransferase superfamily. RNA methyltransferase RlmE family.

It is found in the cytoplasm. It catalyses the reaction uridine(2552) in 23S rRNA + S-adenosyl-L-methionine = 2'-O-methyluridine(2552) in 23S rRNA + S-adenosyl-L-homocysteine + H(+). Specifically methylates the uridine in position 2552 of 23S rRNA at the 2'-O position of the ribose in the fully assembled 50S ribosomal subunit. This is Ribosomal RNA large subunit methyltransferase E from Rhizorhabdus wittichii (strain DSM 6014 / CCUG 31198 / JCM 15750 / NBRC 105917 / EY 4224 / RW1) (Sphingomonas wittichii).